Consider the following 650-residue polypeptide: Glycoprotein 105 (650 aa).

A helical; Signal-anchor for type II membrane protein membrane pass occupies residues 1–32; that stretch reads MATARLGVMRPPRSCALIFLCAFSMATAPTNA. At 33 to 650 the chain is on the virion surface side; that stretch reads TAHRRAGTVK…RFPHVGIGSY (618 aa). N-linked (GlcNAc...) asparagine; by host glycans are attached at residues Asn52, Asn290, Asn332, Asn338, Asn359, Asn422, Asn516, and Asn552.

Associates with the gp82-gp105 complex. N-Glycosylated.

The protein resides in the virion membrane. The polypeptide is Glycoprotein 105 (U96/U97/U98/U99/U100) (Homo sapiens (Human)).